Consider the following 154-residue polypeptide: MRLTKQTNYAVRMLMYCAANGEKLSRIPEIARAYGVSELFLFKILQPLTRAGLVETVRGRNGGVRLPRPASEITLFDVVKVTEDSFAMAECFEAGEIDCPLVDSCGLNAALRKALNAFFEVLQGYTIDDLVKARPQINFLLGLEEPVRPQTSAA.

An HTH rrf2-type domain is found at 2–132; the sequence is RLTKQTNYAV…QGYTIDDLVK (131 aa). Residues cysteine 91, cysteine 99, and cysteine 105 each coordinate [2Fe-2S] cluster.

Requires [2Fe-2S] cluster as cofactor.

Required for growth utilizing PHB cycle intermediates. This is Protein aau3 (aau3) from Rhizobium meliloti (strain 1021) (Ensifer meliloti).